A 313-amino-acid chain; its full sequence is Cytosolic Fe-S cluster assembly factor NUBP1 homolog (313 aa).

Residues 1 to 25 (MSDVPDDANAGCPGTGSAGAGKASG) are disordered. Residues Cys-12, Cys-26, Cys-29, and Cys-35 each contribute to the [4Fe-4S] cluster site. ATP is bound at residue 66 to 73 (GKGGVGKS). 2 residues coordinate [4Fe-4S] cluster: Cys-240 and Cys-243.

This sequence belongs to the Mrp/NBP35 ATP-binding proteins family. NUBP1/NBP35 subfamily. Heterotetramer of 2 NUBP1 and 2 NUBP2 chains. [4Fe-4S] cluster is required as a cofactor. In terms of tissue distribution, expressed in head amphid and labial ciliated sensory neurons and tail phasmid ciliated chemosensory neurons.

The protein localises to the cytoplasm. The protein resides in the cell projection. In terms of biological role, component of the cytosolic iron-sulfur (Fe/S) protein assembly (CIA) machinery. Required for maturation of extramitochondrial Fe-S proteins. The NUBP1-NUBP2 heterotetramer forms a Fe-S scaffold complex, mediating the de novo assembly of an Fe-S cluster and its transfer to target apoproteins. Regulates cilium formation and structure. The protein is Cytosolic Fe-S cluster assembly factor NUBP1 homolog of Caenorhabditis elegans.